The sequence spans 452 residues: Matrilin-3 (452 aa).

Residues 1 to 24 form the signal peptide; sequence MRRALGTLGCCLALLLPLLPAARG. The VWFA domain maps to 54–229; that stretch reads DLVFIIDSSR…GVIEKLTSKF (176 aa). 4 EGF-like domains span residues 235–275, 276–316, 317–357, and 358–398; these read AANT…RTCS, AVDV…KTCS, and AMDV…KTCS. 12 disulfides stabilise this stretch: Cys-239/Cys-250, Cys-246/Cys-259, Cys-261/Cys-274, Cys-280/Cys-291, Cys-287/Cys-300, Cys-302/Cys-315, Cys-321/Cys-332, Cys-328/Cys-341, Cys-343/Cys-356, Cys-362/Cys-373, Cys-369/Cys-382, and Cys-384/Cys-397. Asn-295 carries an N-linked (GlcNAc...) asparagine glycan. Residues 419–451 adopt a coiled-coil conformation; that stretch reads ALQDSVTSRLEALSTKLDEVSQKLQAYQDRQQV.

As to quaternary structure, can form homooligomers (monomers, dimers, trimers and tetramers) and heterooligomers with matrilin-1. Expression is restricted to cartilaginous tissues.

Its subcellular location is the secreted. Functionally, major component of the extracellular matrix of cartilage and may play a role in the formation of extracellular filamentous networks. The protein is Matrilin-3 (MATN3) of Gallus gallus (Chicken).